We begin with the raw amino-acid sequence, 242 residues long: Caspase-14 (242 aa).

A propeptide spanning residues methionine 1–arginine 5 is cleaved from the precursor. Catalysis depends on residues histidine 89 and cysteine 132. Residues glutamate 147–isoleucine 152 constitute a propeptide that is removed on maturation.

Belongs to the peptidase C14A family. Heterodimer of a large and a small subunit, both processed from the precursor; the mature active form is a p17/p10 dimer and the intermediate form a p20/p8 dimer. Post-translationally, maturation by proteolytic processing appears to be a two-step process. The precursor is processed by KLK7 to yield the p20/p8 intermediate form which acts on the precursor to yield the p17/p10 mature form. Initially, cleavage between Ile-152 and Lys-153 has been proposed to yield the large and small subunits of the active enzyme. As to expression, expressed in keratinocytes of adult skin suprabasal layers (from spinous layers to the stratum granulosum and stratum corneum) (at protein level). Expressed in keratinocytes of hair shaft and sebaceous glands (at protein level). In psoriatic skin only expressed at very low levels. The p17/10 mature form is expressed in epidermis stratum corneum, the p20/p8 intermediate form in epidermis upper granular cells of the stratum granulosum.

It localises to the cytoplasm. The protein resides in the nucleus. With respect to regulation, inhibited by caspase-1 inhibitor YVAD-FMK and the pan-caspase inhibitor VAD-FMK. Functionally, non-apoptotic caspase involved in epidermal differentiation. Is the predominant caspase in epidermal stratum corneum. Seems to play a role in keratinocyte differentiation and is required for cornification. Regulates maturation of the epidermis by proteolytically processing filaggrin. In vitro has a preference for the substrate [WY]-X-X-D motif and is active on the synthetic caspase substrate WEHD-ACF. Involved in processing of prosaposin in the epidermis. May be involved in retinal pigment epithelium cell barrier function. Involved in DNA degradation in differentiated keratinocytes probably by cleaving DFFA/ICAD leading to liberation of DFFB/CAD. In Homo sapiens (Human), this protein is Caspase-14 (CASP14).